A 356-amino-acid polypeptide reads, in one-letter code: Butyrate kinase (356 aa).

It belongs to the acetokinase family.

The protein resides in the cytoplasm. The enzyme catalyses butanoate + ATP = butanoyl phosphate + ADP. It functions in the pathway lipid metabolism; butanoate metabolism. Its function is as follows. Catalyzes the conversion of butyryl-CoA through butyryl phosphate to butyrate. In Clostridium perfringens (strain 13 / Type A), this protein is Butyrate kinase (buk).